Here is a 367-residue protein sequence, read N- to C-terminus: tRNA-specific 2-thiouridylase MnmA (367 aa).

ATP-binding positions include glycine 11–serine 18 and leucine 37. The active-site Nucleophile is the cysteine 99. The cysteines at positions 99 and 195 are disulfide-linked. Glycine 123 lines the ATP pocket. An interaction with tRNA region spans residues lysine 145 to glutamine 147. The active-site Cysteine persulfide intermediate is the cysteine 195. The segment at arginine 304–tyrosine 305 is interaction with tRNA.

It belongs to the MnmA/TRMU family.

The protein localises to the cytoplasm. The catalysed reaction is S-sulfanyl-L-cysteinyl-[protein] + uridine(34) in tRNA + AH2 + ATP = 2-thiouridine(34) in tRNA + L-cysteinyl-[protein] + A + AMP + diphosphate + H(+). Its function is as follows. Catalyzes the 2-thiolation of uridine at the wobble position (U34) of tRNA, leading to the formation of s(2)U34. The sequence is that of tRNA-specific 2-thiouridylase MnmA from Chlorobium luteolum (strain DSM 273 / BCRC 81028 / 2530) (Pelodictyon luteolum).